Here is a 275-residue protein sequence, read N- to C-terminus: Homeobox-leucine zipper protein ATHB-17 (275 aa).

Positions 95-143 (SSPLSDEGSGGGRDQLRLDMNRLPSSEDGDDEEFSHDDGSAPPRKKLRL) are disordered. The segment at residues 136-195 (PPRKKLRLTREQSRLLEDSFRQNHTLNPKQKEVLAKHLMLRPRQIEVWFQNRRARSKLKQ) is a DNA-binding region (homeobox). Residues 203 to 224 (LKRWFGSLTEENHRLHREVEEL) form a leucine-zipper region. Residues 252 to 275 (AASPSRAVVPVPAKKTFPPQERDR) form a disordered region.

The protein belongs to the HD-ZIP homeobox family. Class II subfamily.

It localises to the nucleus. Functionally, probable transcription factor. The chain is Homeobox-leucine zipper protein ATHB-17 (ATHB-17) from Arabidopsis thaliana (Mouse-ear cress).